An 895-amino-acid chain; its full sequence is La RNA-binding domain-containing protein LHP1 (895 aa).

5 disordered regions span residues 24–265 (ANGN…PPPS), 285–344 (SATS…HDAT), 359–590 (GEDK…LGHG), 796–857 (PDAA…AQDV), and 870–895 (VNGE…NYEQ). The span at 31–75 (SSPSSSSSATPEPTSLSSSTSGKKAFSTATSKSGQQKQGSSPQPG) shows a compositional bias: low complexity. A compositionally biased stretch (basic and acidic residues) spans 95-143 (QRTDRSEEKEKRGSSSKNWRERSHRDEKNQDDGEKRNGRERSKKEKGDK). Residues 152–170 (SATSSEKTAKSLSSSTKNA) show a composition bias toward low complexity. Composition is skewed to polar residues over residues 172 to 184 (GVTS…NPIA) and 192 to 216 (KAQN…STIN). Positions 228-244 (DNWRARPAKVEKNEKTE) are enriched in basic and acidic residues. Residues 251 to 260 (QAQPQPQRQL) are compositionally biased toward low complexity. Over residues 296–314 (KSDKEKSLTNGMVKEEDSG) the composition is skewed to basic and acidic residues. Residues 325–336 (AAAAAAAGTSST) are compositionally biased toward low complexity. 4 stretches are compositionally biased toward basic and acidic residues: residues 359-371 (GEDK…ERLN), 405-428 (HAAE…REGG), 452-468 (EGKK…DGHA), and 485-495 (GDVKETKEGDA). Positions 496–508 (RSASQQESSSHRS) are enriched in low complexity. Over residues 510–521 (PSISASANTGID) the composition is skewed to polar residues. The span at 563 to 572 (RGSFGGGRAR) shows a compositional bias: gly residues. Positions 706–796 (VPNLDPLRFY…GAESHRWVLP (91 aa)) constitute an HTH La-type RNA-binding domain. Phosphoserine is present on serine 847. Residues 873-884 (EIKEKEEVKAME) show a composition bias toward basic and acidic residues. Acidic residues predominate over residues 885–895 (NEGEESENYEQ).

Functionally, may act as an RNA-binding protein. In Cryptococcus neoformans var. grubii serotype A (strain H99 / ATCC 208821 / CBS 10515 / FGSC 9487) (Filobasidiella neoformans var. grubii), this protein is La RNA-binding domain-containing protein LHP1.